We begin with the raw amino-acid sequence, 432 residues long: 3-phosphoshikimate 1-carboxyvinyltransferase (432 aa).

The 3-phosphoshikimate site is built by Lys-22, Ser-23, and Arg-27. Position 22 (Lys-22) interacts with phosphoenolpyruvate. Residues Gly-96 and Arg-127 each contribute to the phosphoenolpyruvate site. 3-phosphoshikimate contacts are provided by Ser-173, Ser-174, Gln-175, Ser-201, Asp-316, Asn-339, and Lys-343. Gln-175 lines the phosphoenolpyruvate pocket. The active-site Proton acceptor is Asp-316. Arg-347, Arg-391, and Lys-416 together coordinate phosphoenolpyruvate.

It belongs to the EPSP synthase family. As to quaternary structure, monomer.

The protein resides in the cytoplasm. It carries out the reaction 3-phosphoshikimate + phosphoenolpyruvate = 5-O-(1-carboxyvinyl)-3-phosphoshikimate + phosphate. The protein operates within metabolic intermediate biosynthesis; chorismate biosynthesis; chorismate from D-erythrose 4-phosphate and phosphoenolpyruvate: step 6/7. Its function is as follows. Catalyzes the transfer of the enolpyruvyl moiety of phosphoenolpyruvate (PEP) to the 5-hydroxyl of shikimate-3-phosphate (S3P) to produce enolpyruvyl shikimate-3-phosphate and inorganic phosphate. The protein is 3-phosphoshikimate 1-carboxyvinyltransferase of Actinobacillus pleuropneumoniae serotype 5b (strain L20).